A 756-amino-acid polypeptide reads, in one-letter code: 5-methyltetrahydropteroyltriglutamate--homocysteine methyltransferase (756 aa).

5-methyltetrahydropteroyltri-L-glutamate is bound by residues 16 to 19 and K116; that span reads RELK. Residues 435-437 and E488 each bind L-homocysteine; that span reads IGS. L-methionine is bound by residues 435–437 and E488; that span reads IGS. Residues 519–520 and W565 each bind 5-methyltetrahydropteroyltri-L-glutamate; that span reads RC. D603 is a binding site for L-homocysteine. Residue D603 participates in L-methionine binding. E609 is a binding site for 5-methyltetrahydropteroyltri-L-glutamate. Zn(2+)-binding residues include H645, C647, and E669. Catalysis depends on H698, which acts as the Proton donor. A Zn(2+)-binding site is contributed by C730.

It belongs to the vitamin-B12 independent methionine synthase family. The cofactor is Zn(2+).

It catalyses the reaction 5-methyltetrahydropteroyltri-L-glutamate + L-homocysteine = tetrahydropteroyltri-L-glutamate + L-methionine. It participates in amino-acid biosynthesis; L-methionine biosynthesis via de novo pathway; L-methionine from L-homocysteine (MetE route): step 1/1. Catalyzes the transfer of a methyl group from 5-methyltetrahydrofolate to homocysteine resulting in methionine formation. The sequence is that of 5-methyltetrahydropteroyltriglutamate--homocysteine methyltransferase from Marinobacter nauticus (strain ATCC 700491 / DSM 11845 / VT8) (Marinobacter aquaeolei).